The sequence spans 418 residues: UDP-N-acetylglucosamine 1-carboxyvinyltransferase (418 aa).

Residue 22–23 (KN) coordinates phosphoenolpyruvate. R91 contacts UDP-N-acetyl-alpha-D-glucosamine. C115 (proton donor) is an active-site residue. C115 carries the 2-(S-cysteinyl)pyruvic acid O-phosphothioketal modification. D305 and I327 together coordinate UDP-N-acetyl-alpha-D-glucosamine.

Belongs to the EPSP synthase family. MurA subfamily.

It is found in the cytoplasm. It catalyses the reaction phosphoenolpyruvate + UDP-N-acetyl-alpha-D-glucosamine = UDP-N-acetyl-3-O-(1-carboxyvinyl)-alpha-D-glucosamine + phosphate. The protein operates within cell wall biogenesis; peptidoglycan biosynthesis. In terms of biological role, cell wall formation. Adds enolpyruvyl to UDP-N-acetylglucosamine. The protein is UDP-N-acetylglucosamine 1-carboxyvinyltransferase of Aeromonas hydrophila subsp. hydrophila (strain ATCC 7966 / DSM 30187 / BCRC 13018 / CCUG 14551 / JCM 1027 / KCTC 2358 / NCIMB 9240 / NCTC 8049).